The sequence spans 422 residues: Serine--tRNA ligase (422 aa).

L-serine is bound at residue Thr229–Glu231. An ATP-binding site is contributed by Arg260–Glu262. Glu283 contributes to the L-serine binding site. Glu347 to Ser350 contributes to the ATP binding site. Ser383 lines the L-serine pocket.

It belongs to the class-II aminoacyl-tRNA synthetase family. Type-1 seryl-tRNA synthetase subfamily. Homodimer. The tRNA molecule binds across the dimer.

The protein localises to the cytoplasm. It catalyses the reaction tRNA(Ser) + L-serine + ATP = L-seryl-tRNA(Ser) + AMP + diphosphate + H(+). It carries out the reaction tRNA(Sec) + L-serine + ATP = L-seryl-tRNA(Sec) + AMP + diphosphate + H(+). It functions in the pathway aminoacyl-tRNA biosynthesis; selenocysteinyl-tRNA(Sec) biosynthesis; L-seryl-tRNA(Sec) from L-serine and tRNA(Sec): step 1/1. Catalyzes the attachment of serine to tRNA(Ser). Is also able to aminoacylate tRNA(Sec) with serine, to form the misacylated tRNA L-seryl-tRNA(Sec), which will be further converted into selenocysteinyl-tRNA(Sec). This is Serine--tRNA ligase from Geobacter sulfurreducens (strain ATCC 51573 / DSM 12127 / PCA).